Consider the following 477-residue polypeptide: Ribulose bisphosphate carboxylase large chain (477 aa).

Positions 1 to 2 (MS) are excised as a propeptide. Pro3 carries the post-translational modification N-acetylproline. Position 14 is an N6,N6,N6-trimethyllysine (Lys14). Residues Asn123 and Thr173 each contribute to the substrate site. Lys175 functions as the Proton acceptor in the catalytic mechanism. Residue Lys177 coordinates substrate. Lys201, Asp203, and Glu204 together coordinate Mg(2+). Lys201 is subject to N6-carboxylysine. The Proton acceptor role is filled by His294. Substrate is bound by residues Arg295, His327, and Ser379.

The protein belongs to the RuBisCO large chain family. Type I subfamily. Heterohexadecamer of 8 large chains and 8 small chains; disulfide-linked. The disulfide link is formed within the large subunit homodimers. Mg(2+) is required as a cofactor. The disulfide bond which can form in the large chain dimeric partners within the hexadecamer appears to be associated with oxidative stress and protein turnover.

The protein localises to the plastid. It is found in the chloroplast. The catalysed reaction is 2 (2R)-3-phosphoglycerate + 2 H(+) = D-ribulose 1,5-bisphosphate + CO2 + H2O. It carries out the reaction D-ribulose 1,5-bisphosphate + O2 = 2-phosphoglycolate + (2R)-3-phosphoglycerate + 2 H(+). Functionally, ruBisCO catalyzes two reactions: the carboxylation of D-ribulose 1,5-bisphosphate, the primary event in carbon dioxide fixation, as well as the oxidative fragmentation of the pentose substrate in the photorespiration process. Both reactions occur simultaneously and in competition at the same active site. This is Ribulose bisphosphate carboxylase large chain from Nicotiana debneyi (Debney's tobacco).